Here is a 227-residue protein sequence, read N- to C-terminus: tRNA (guanine-N(1)-)-methyltransferase (227 aa).

Residues G112 and 132-137 each bind S-adenosyl-L-methionine; that span reads IGDFIL.

This sequence belongs to the RNA methyltransferase TrmD family. As to quaternary structure, homodimer.

The protein localises to the cytoplasm. It carries out the reaction guanosine(37) in tRNA + S-adenosyl-L-methionine = N(1)-methylguanosine(37) in tRNA + S-adenosyl-L-homocysteine + H(+). Its function is as follows. Specifically methylates guanosine-37 in various tRNAs. This Sulfurovum sp. (strain NBC37-1) protein is tRNA (guanine-N(1)-)-methyltransferase.